The chain runs to 914 residues: Thyroid peroxidase (914 aa).

The first 31 residues, 1-31 (MRTLGAMAIMLVVMGTVIFLSFILRSRDILC), serve as a signal peptide directing secretion. Over 32–834 (GKTMKSHVIS…TCIDSGRLPR (803 aa)) the chain is Extracellular. N-linked (GlcNAc...) asparagine glycosylation is present at N123. An intrachain disulfide couples C136 to C152. Heme b is bound at residue D232. The Proton acceptor role is filled by H233. D234 is a Ca(2+) binding site. Disulfide bonds link C253-C263 and C257-C278. N-linked (GlcNAc...) asparagine glycosylation is found at N271 and N299. The Ca(2+) site is built by T313, F315, D317, and S319. N-linked (GlcNAc...) asparagine glycosylation occurs at N334. E387 and H482 together coordinate heme b. 7 disulfide bridges follow: C586/C643, C684/C709, C730/C770, C756/C782, C788/C802, C796/C811, and C813/C826. N603 carries an N-linked (GlcNAc...) asparagine glycan. The 56-residue stretch at 728 to 783 (DKCVFPEEVDNGNFVHCEESGKLVLVYSCFHGYKLQGQEQVTCTQKGWDSEPPVCK) folds into the Sushi domain. Residues 784–827 (DVNECADLTHPPCHPSAQCKNTKGSFQCVCTDPYVLGEDEKTCI) enclose the EGF-like; calcium-binding domain. The chain crosses the membrane as a helical span at residues 835–859 (ASWVSIALGALLIGGLASLTWIVIC). Topologically, residues 860-914 (RWTHADKKATLPITERVTTQSGCRKSQGRGISPHKAAAQDTGQEPASGSRVLLCE) are cytoplasmic. Positions 881–909 (GCRKSQGRGISPHKAAAQDTGQEPASGSR) are disordered.

Belongs to the peroxidase family. XPO subfamily. In terms of assembly, interacts with DUOX1, DUOX2 and CYBA. The cofactor is Ca(2+). Heme b serves as cofactor. Post-translationally, heme is covalently bound through a H(2)O(2)-dependent autocatalytic process. Heme insertion is important for the delivery of protein at the cell surface. Cleaved in its N-terminal part.

The protein localises to the membrane. It catalyses the reaction 2 iodide + H2O2 + 2 H(+) = diiodine + 2 H2O. The catalysed reaction is [thyroglobulin]-L-tyrosine + iodide + H2O2 + H(+) = [thyroglobulin]-3-iodo-L-tyrosine + 2 H2O. It carries out the reaction [thyroglobulin]-3-iodo-L-tyrosine + iodide + H2O2 + H(+) = [thyroglobulin]-3,5-diiodo-L-tyrosine + 2 H2O. The enzyme catalyses 2 [thyroglobulin]-3,5-diiodo-L-tyrosine + H2O2 = [thyroglobulin]-L-thyroxine + [thyroglobulin]-dehydroalanine + 2 H2O. It catalyses the reaction [thyroglobulin]-3-iodo-L-tyrosine + [thyroglobulin]-3,5-diiodo-L-tyrosine + H2O2 = [thyroglobulin]-3,3',5-triiodo-L-thyronine + [thyroglobulin]-dehydroalanine + 2 H2O. It functions in the pathway hormone biosynthesis; thyroid hormone biosynthesis. Functionally, iodination and coupling of the hormonogenic tyrosines in thyroglobulin to yield the thyroid hormones T(3) and T(4). The protein is Thyroid peroxidase (Tpo) of Mus musculus (Mouse).